Reading from the N-terminus, the 90-residue chain is DNA-binding protein HU-alpha (90 aa).

The protein belongs to the bacterial histone-like protein family. Heterodimer of an alpha and a beta chain.

In terms of biological role, histone-like DNA-binding protein which is capable of wrapping DNA to stabilize it, and thus to prevent its denaturation under extreme environmental conditions. This chain is DNA-binding protein HU-alpha (hupA), found in Escherichia coli O157:H7.